The primary structure comprises 282 residues: NAC domain-containing protein 1 (282 aa).

Residues Leu9 to Lys161 form the NAC domain. Residues Val106–Thr167 mediate DNA binding. The stretch at Lys161–Asn188 forms a coiled coil.

Expressed in roots, stem, flowers, and leaves.

It localises to the nucleus. Its function is as follows. Transcription factor that binds DNA motifs 5'-CGT[AG](5N)NACG[ACT][AC][AT][ACG][ACT]-3' and 5'-CACG[ACT][AC][AT][AGT][CT]-3' in target genes promoters. Promotes leaf senescence and reduces fruit yield and sugar content, probably by establishing abscisic acid (ABA) homeostasis. This chain is NAC domain-containing protein 1, found in Solanum lycopersicum (Tomato).